A 268-amino-acid chain; its full sequence is Esterase GME11355 (268 aa).

Catalysis depends on charge relay system residues Ser122, Asp212, and His240.

It belongs to the LovG family.

It functions in the pathway secondary metabolite biosynthesis. In terms of biological role, esterase; part of the gene cluster that mediates the biosynthesis of dibenzodioxocinones such as pestalotiollide B, a novel class of inhibitors against cholesterol ester transfer protein (CEPT). The biosynthesis initiates from condensation of acetate and malonate units catalyzed by the non-reducing PKS pks8/GME11356. Pks8/GME11356 lacks a thioesterase (TE) domain, which is important to the cyclizing of the third ring of atrochrysone carboxylic acid, and the esterase GME11355 might play the role of TE and catalyzes the cyclization reaction of the C ring. The lactamase-like protein GME11357 (or other beta-lactamases in Pestalotiopsis microspora) probably hydrolyzes the thioester bond between the ACP of pks8/GME11356 and the intermediate to release atrochrysone carboxylic acid, which is spontaneously dehydrates to form endocrocin anthrone. Endocrocin anthrone is further converted to emodin via the endocrocin intermediate. Emodin is then oxidized by several enzymes such as the Baeyer-Villiger oxidase GME11358, the oxidoreductase GME11367, the short chain dehydrogenase/reductase GME11373, as well as by other oxidoreductases from the cluster, to modify the A and C rings and open the B ring, and finally yield monodictyphenone. The prenyltransferase GME11375 may catalyze the addition reaction between the C5 side chains and the carbon bone of dibenzodioxocinones. The remaining biochemical reactions to the final product dibenzodioxocinones should be methylation catalyzed by methyltransferase GME11366 and reduction and lactonization reaction catalyzed by a series of oxidordeuctases. The polypeptide is Esterase GME11355 (Pestalotiopsis microspora).